A 235-amino-acid chain; its full sequence is (5-formylfuran-3-yl)methyl phosphate synthase (235 aa).

Residue K27 is the Schiff-base intermediate with substrate of the active site. The active-site Proton acceptor is K86.

It belongs to the MfnB family.

The catalysed reaction is 2 D-glyceraldehyde 3-phosphate = 4-(hydroxymethyl)-2-furancarboxaldehyde phosphate + phosphate + 2 H2O. It functions in the pathway cofactor biosynthesis; methanofuran biosynthesis. In terms of biological role, catalyzes the formation of 4-(hydroxymethyl)-2-furancarboxaldehyde phosphate (4-HFC-P) from two molecules of glyceraldehyde-3-P (GA-3-P). In Archaeoglobus fulgidus (strain ATCC 49558 / DSM 4304 / JCM 9628 / NBRC 100126 / VC-16), this protein is (5-formylfuran-3-yl)methyl phosphate synthase.